The primary structure comprises 203 residues: Holliday junction branch migration complex subunit RuvA (203 aa).

The tract at residues 1 to 63 is domain I; the sequence is MIAFVSGPVA…EDSLTLYGFV (63 aa). Residues 64-141 form a domain II region; that stretch reads DDDERQVFEL…GEPLGTGGPA (78 aa). Residues 141-145 are flexible linker; the sequence is AIGRA. A domain III region spans residues 146–203; that stretch reads VTTGWREQLHAALIGLGYATREADEAVAAVAPQAEAAGGTPQVGQLLKAALQTLNRTR.

The protein belongs to the RuvA family. As to quaternary structure, homotetramer. Forms an RuvA(8)-RuvB(12)-Holliday junction (HJ) complex. HJ DNA is sandwiched between 2 RuvA tetramers; dsDNA enters through RuvA and exits via RuvB. An RuvB hexamer assembles on each DNA strand where it exits the tetramer. Each RuvB hexamer is contacted by two RuvA subunits (via domain III) on 2 adjacent RuvB subunits; this complex drives branch migration. In the full resolvosome a probable DNA-RuvA(4)-RuvB(12)-RuvC(2) complex forms which resolves the HJ.

Its subcellular location is the cytoplasm. The RuvA-RuvB-RuvC complex processes Holliday junction (HJ) DNA during genetic recombination and DNA repair, while the RuvA-RuvB complex plays an important role in the rescue of blocked DNA replication forks via replication fork reversal (RFR). RuvA specifically binds to HJ cruciform DNA, conferring on it an open structure. The RuvB hexamer acts as an ATP-dependent pump, pulling dsDNA into and through the RuvAB complex. HJ branch migration allows RuvC to scan DNA until it finds its consensus sequence, where it cleaves and resolves the cruciform DNA. The chain is Holliday junction branch migration complex subunit RuvA from Streptomyces avermitilis (strain ATCC 31267 / DSM 46492 / JCM 5070 / NBRC 14893 / NCIMB 12804 / NRRL 8165 / MA-4680).